The sequence spans 259 residues: 4-hydroxy-tetrahydrodipicolinate reductase (259 aa).

NAD(+) is bound by residues 8-13, 94-96, and 120-123; these read GFAGAM, GTT, and APNF. The active-site Proton donor/acceptor is His-150. His-151 contacts (S)-2,3,4,5-tetrahydrodipicolinate. The active-site Proton donor is the Lys-154. 160 to 161 is a binding site for (S)-2,3,4,5-tetrahydrodipicolinate; that stretch reads GT.

It belongs to the DapB family.

The protein localises to the cytoplasm. It catalyses the reaction (S)-2,3,4,5-tetrahydrodipicolinate + NAD(+) + H2O = (2S,4S)-4-hydroxy-2,3,4,5-tetrahydrodipicolinate + NADH + H(+). The catalysed reaction is (S)-2,3,4,5-tetrahydrodipicolinate + NADP(+) + H2O = (2S,4S)-4-hydroxy-2,3,4,5-tetrahydrodipicolinate + NADPH + H(+). It participates in amino-acid biosynthesis; L-lysine biosynthesis via DAP pathway; (S)-tetrahydrodipicolinate from L-aspartate: step 4/4. Its function is as follows. Catalyzes the conversion of 4-hydroxy-tetrahydrodipicolinate (HTPA) to tetrahydrodipicolinate. This is 4-hydroxy-tetrahydrodipicolinate reductase from Limosilactobacillus fermentum (strain NBRC 3956 / LMG 18251) (Lactobacillus fermentum).